A 294-amino-acid chain; its full sequence is Undecaprenyl-diphosphatase (294 aa).

6 helical membrane-spanning segments follow: residues 39-59 (PGAAFTAIIQIGTELAVILYF), 93-113 (TQMGWFIIIGTLPILIAGLLF), 123-143 (NLWITVTVLIIFGILLWVVDA), 197-217 (VSFLMAIPAVFGAGILEAVSA), 234-254 (ATIAATIVAFVVGYVVIIGFL), and 265-285 (FAIYRIALAVVVALLLICGVL).

It belongs to the UppP family.

It localises to the cell membrane. It carries out the reaction di-trans,octa-cis-undecaprenyl diphosphate + H2O = di-trans,octa-cis-undecaprenyl phosphate + phosphate + H(+). In terms of biological role, catalyzes the dephosphorylation of undecaprenyl diphosphate (UPP). Confers resistance to bacitracin. This is Undecaprenyl-diphosphatase from Bifidobacterium adolescentis (strain ATCC 15703 / DSM 20083 / NCTC 11814 / E194a).